The sequence spans 112 residues: Toxin-like structure LSTX-D10 (112 aa).

Positions 1–20 (MMKVLVVVALLVTLISYSSS) are cleaved as a signal peptide. Positions 21–41 (EGIDDLEADELLSLMANEQTR) are excised as a propeptide. 4 disulfides stabilise this stretch: cysteine 45/cysteine 60, cysteine 52/cysteine 69, cysteine 59/cysteine 84, and cysteine 71/cysteine 82.

Belongs to the neurotoxin 19 (CSTX) family. 01 subfamily. Expressed by the venom gland.

The protein localises to the secreted. The chain is Toxin-like structure LSTX-D10 from Lycosa singoriensis (Wolf spider).